The following is a 122-amino-acid chain: MIQQQTYLNVADNSGARKLMCLRVLGTGNCRYGGIGDEIIAVVKDAIPNMPVKKSDVVKAVIVRTRHPLRRASGMTIRFDDNAAVIINNDGNPKGTRVFGPVARELRDKNYTKIVSLAPEVL.

Belongs to the universal ribosomal protein uL14 family. As to quaternary structure, part of the 50S ribosomal subunit. Forms a cluster with proteins L3 and L19. In the 70S ribosome, L14 and L19 interact and together make contacts with the 16S rRNA in bridges B5 and B8.

Its function is as follows. Binds to 23S rRNA. Forms part of two intersubunit bridges in the 70S ribosome. The protein is Large ribosomal subunit protein uL14 of Gloeothece citriformis (strain PCC 7424) (Cyanothece sp. (strain PCC 7424)).